A 299-amino-acid polypeptide reads, in one-letter code: tRNA pseudouridine synthase B (299 aa).

The active-site Nucleophile is the Asp-38.

Belongs to the pseudouridine synthase TruB family. Type 1 subfamily.

It catalyses the reaction uridine(55) in tRNA = pseudouridine(55) in tRNA. Responsible for synthesis of pseudouridine from uracil-55 in the psi GC loop of transfer RNAs. This chain is tRNA pseudouridine synthase B, found in Alkaliphilus oremlandii (strain OhILAs) (Clostridium oremlandii (strain OhILAs)).